The chain runs to 2293 residues: G-protein coupled receptor 179 (2293 aa).

An N-terminal signal peptide occupies residues 1–27 (MGARAVVISSLAWGLLSCCFLCSGALG). The tract at residues 62–245 (FLYSGDVQRL…CHEGQLRPGW (184 aa)) is cache-like region. Asparagine 75 carries an N-linked (GlcNAc...) asparagine glycan. Cysteine 76 and cysteine 236 form a disulfide bridge. N-linked (GlcNAc...) asparagine glycosylation occurs at asparagine 298. 7 consecutive transmembrane segments (helical) span residues 383–403 (AVLACQACCMLAVFLSMLVAY), 416–436 (IVLLETILFGSLLLYFPVFIL), 445–465 (CVALRWVRLLGFAVVYGTIIL), 494–514 (LGQLLLLVLGFLVVWTAGALE), 544–564 (YIMVVAEMLLLCWGSFLCYAT), 585–602 (LLLSTAFHTARFVLVPSL), and 608–628 (LLLFFLHTHSTVTATLALIFI). Residues cysteine 445 and cysteine 537 are joined by a disulfide bond. A glycan (N-linked (GlcNAc...) asparagine) is linked at asparagine 661. The tract at residues 733 to 812 (QHSRDSGSLG…GRESLADGPP (80 aa)) is disordered. Residues 738–759 (SGSLGLGSLPGSSRRRLLSSSL) are compositionally biased toward low complexity. A compositionally biased stretch (basic and acidic residues) spans 773–782 (STYDHHREHN). A glycan (N-linked (GlcNAc...) asparagine) is linked at asparagine 823. 11 disordered regions span residues 872–935 (EERK…HPPI), 1046–1235 (GTGE…NPAL), 1275–1294 (ERTEGGSLEKKPSRQVLSRS), 1326–1345 (EAVCPWESPDSGGLSPQLVH), 1388–1411 (GTSTQRVQELPEERQKSPKKATFW), 1479–1560 (ELAG…HGGS), 1578–1770 (ATLS…VCPW), 1792–1828 (TVGKGLEREPGCEPERQRRQNLEEAGLPFQEEGTSKG), 1844–1882 (WKPPAQVPKVSDLPLSTVGQGVEGQSLEASDRASEKGEL), 1924–2051 (SSSH…GSEK), and 2212–2293 (FLPE…WDCE). Residues 1080-1089 (LKTPLQQGSV) show a composition bias toward polar residues. Basic and acidic residues-rich tracts occupy residues 1105-1123 (TYKEKDGGEGTPETEKGKP), 1173-1186 (CQKEGSREQEDRNK), and 1275-1286 (ERTEGGSLEKKP). 2 stretches are compositionally biased toward basic and acidic residues: residues 1546–1555 (ASSKAGEKLL) and 1597–1632 (RTSEHPSKGEVHKDEEKMPGRARIKAQEEAEGRIQK). Polar residues predominate over residues 1644–1663 (PGSTPQRDTEKAQASLQRQG). Composition is skewed to basic and acidic residues over residues 1682-1698 (GEERTIGAEASEARPND) and 1717-1728 (KKSERLGSEKEV). Polar residues predominate over residues 1737-1747 (PGDSSQQPDTP). 3 stretches are compositionally biased toward basic and acidic residues: residues 1748–1761 (NTEKLKDELQEHGS), 1796–1813 (GLEREPGCEPERQRRQNL), and 1872–1882 (ASDRASEKGEL). Polar residues predominate over residues 1937–1948 (RVSSQPLVSTGD). The segment covering 1979 to 2007 (TETEMSRQDEKEKSQEEKERAPETRDHEG) has biased composition (basic and acidic residues). The segment covering 2283–2293 (SPPPDYPWDCE) has biased composition (pro residues).

It belongs to the G-protein coupled receptor 3 family. In terms of assembly, homodimer. Associates with the R7 group RGS-GNB5 complexes, composed of an R7 group RGS subunit (RGS6, RGS7, RGS9 or RGS11) and GNB5, promoting their localization to the cell membrane and regulating the GTPase activator activity of R7 RGS proteins. Interacts with TRPM1. Interacts with GRM6. Interacts with EGFLAM; transsynaptic interaction is required for synaptic organization of photoreceptor cells.

The protein resides in the cell membrane. It is found in the postsynaptic cell membrane. The protein localises to the cell projection. Its subcellular location is the dendrite. In terms of biological role, orphan receptor involved in vision. Required for signal transduction through retinal depolarizing bipolar cells. Acts as an atypical G-protein coupled receptor that recruits and regulates the R7 group RGS-GNB5 complexes instead of activating G proteins: promotes the GTPase activator activity of R7 RGS proteins, increasing the GTPase activity of G protein alpha subunits, thereby driving them into their inactive GDP-bound form. Associates with components of metabotropic signaling cascade in retina ON-bipolar neurons, such as TRPM1 and GRM6: may control the ability of the GRM6 cascade to gate TRPM1. The protein is G-protein coupled receptor 179 of Mus musculus (Mouse).